A 20-amino-acid chain; its full sequence is KNWAVLVAGSNGWPNYRHHA.

This sequence belongs to the peptidase C13 family.

The catalysed reaction is Hydrolysis of proteins and small molecule substrates at -Asn-|-Xaa- bonds.. This Fasciola hepatica (Liver fluke) protein is Hemoglobinase-like protein 1.